The primary structure comprises 328 residues: Sulfate adenylyltransferase subunit 2 (328 aa).

2 disordered regions span residues 15–34 (AAPD…PSSH) and 304–328 (SERE…EGYF).

The protein belongs to the PAPS reductase family. CysD subfamily. Heterodimer composed of CysD, the smaller subunit, and CysN.

It carries out the reaction sulfate + ATP + H(+) = adenosine 5'-phosphosulfate + diphosphate. Its pathway is sulfur metabolism; hydrogen sulfide biosynthesis; sulfite from sulfate: step 1/3. With CysN forms the ATP sulfurylase (ATPS) that catalyzes the adenylation of sulfate producing adenosine 5'-phosphosulfate (APS) and diphosphate, the first enzymatic step in sulfur assimilation pathway. APS synthesis involves the formation of a high-energy phosphoric-sulfuric acid anhydride bond driven by GTP hydrolysis by CysN coupled to ATP hydrolysis by CysD. This chain is Sulfate adenylyltransferase subunit 2, found in Rhodopseudomonas palustris (strain BisA53).